Consider the following 198-residue polypeptide: Proteasome subunit beta type-2 (198 aa).

This sequence belongs to the peptidase T1B family. In terms of assembly, the 26S proteasome consists of a 20S proteasome core and two 19S regulatory subunits. The 20S proteasome core is composed of 28 subunits that are arranged in four stacked rings, resulting in a barrel-shaped structure. The two end rings are each formed by seven alpha subunits, and the two central rings are each formed by seven beta subunits. The catalytic chamber with the active sites is on the inside of the barrel.

It is found in the cytoplasm. Its subcellular location is the nucleus. Functionally, non-catalytic component of the proteasome, a multicatalytic proteinase complex which is characterized by its ability to cleave peptides with Arg, Phe, Tyr, Leu, and Glu adjacent to the leaving group at neutral or slightly basic pH. The proteasome has an ATP-dependent proteolytic activity. The sequence is that of Proteasome subunit beta type-2 (psmB2) from Dictyostelium discoideum (Social amoeba).